The sequence spans 384 residues: S-adenosylmethionine synthase (384 aa).

H15 lines the ATP pocket. D17 provides a ligand contact to Mg(2+). K(+) is bound at residue E43. The L-methionine site is built by E56 and Q99. A flexible loop region spans residues Q99 to R109. ATP-binding positions include D164–K166, R230–F231, D239, R245–K246, A262, and K266. D239 contributes to the L-methionine binding site. K270 provides a ligand contact to L-methionine.

The protein belongs to the AdoMet synthase family. As to quaternary structure, homotetramer; dimer of dimers. Mg(2+) is required as a cofactor. Requires K(+) as cofactor.

The protein localises to the cytoplasm. It catalyses the reaction L-methionine + ATP + H2O = S-adenosyl-L-methionine + phosphate + diphosphate. The protein operates within amino-acid biosynthesis; S-adenosyl-L-methionine biosynthesis; S-adenosyl-L-methionine from L-methionine: step 1/1. In terms of biological role, catalyzes the formation of S-adenosylmethionine (AdoMet) from methionine and ATP. The overall synthetic reaction is composed of two sequential steps, AdoMet formation and the subsequent tripolyphosphate hydrolysis which occurs prior to release of AdoMet from the enzyme. In Salmonella gallinarum (strain 287/91 / NCTC 13346), this protein is S-adenosylmethionine synthase.